We begin with the raw amino-acid sequence, 312 residues long: Olfactory receptor 51B2 (312 aa).

Residues 1–23 (MWPNITAAPFLLTGFPGLEAAHH) are Extracellular-facing. N-linked (GlcNAc...) asparagine glycosylation occurs at Asn-4. A helical membrane pass occupies residues 24–44 (WISIPFFAVYVCILLGNGMLL). Topologically, residues 45-52 (YLIKHDHS) are cytoplasmic. The chain crosses the membrane as a helical span at residues 53 to 73 (LHEPMYYFLTMLAGTDLMVTL). The Extracellular portion of the chain corresponds to 74-97 (TTMPTVMGILWVNHREISSVGCFL). Cys-95 and Cys-187 are joined by a disulfide. The chain crosses the membrane as a helical span at residues 98-118 (QAYFIHSLSVVESGSLLAMAY). Over 119 to 137 (DCFIAIRNPLRYASILTNT) the chain is Cytoplasmic. The helical transmembrane segment at 138-158 (RVIALGVGVFLRGFVSILPVI) threads the bilayer. At 159 to 194 (LRLFSFSYCKSHVITRAFCLHQEIMRLACADITFNR) the chain is on the extracellular side. The chain crosses the membrane as a helical span at residues 195 to 215 (LYPVILISLTIFLDCLIILFS). Residues 216-235 (YILILNTVIGIASGEERAKA) lie on the Cytoplasmic side of the membrane. The chain crosses the membrane as a helical span at residues 236–256 (LNTCISHISCVLIFYVTVMGL). Residues 257 to 271 (TFIYRFGKNVPEVVH) lie on the Extracellular side of the membrane. Residues 272 to 292 (IIMSYIYFLFPPLMNPVIYSI) form a helical membrane-spanning segment. Residues 293-312 (KTKQIQYGIIRLLSKHRFSS) are Cytoplasmic-facing.

The protein belongs to the G-protein coupled receptor 1 family. Post-translationally, ubiquitinated by the CRL2(FEM1A) and CRL2(FEM1C) complexes, which recognize the -Lys-Xaa-Xaa-Arg C-degron at the C-terminus, leading to its degradation.

It is found in the cell membrane. Its function is as follows. Odorant receptor. This is Olfactory receptor 51B2 (OR51B2) from Homo sapiens (Human).